The primary structure comprises 100 residues: MARKSLIQRDKKRKKLELKYHWIRGSLKKEIHKVPLLSDKWEIYVKLQSLPRNSAPTRLHRRCFLTGRPRANYRDFGLSGHRLREMVQACLLPGATRSSW.

It belongs to the universal ribosomal protein uS14 family. In terms of assembly, part of the 30S ribosomal subunit.

Its subcellular location is the plastid. Binds 16S rRNA, required for the assembly of 30S particles. The chain is Small ribosomal subunit protein uS14c (rps14) from Cuscuta reflexa (Southern Asian dodder).